The following is a 235-amino-acid chain: Secretory carrier-associated membrane protein 5A (235 aa).

Over 1-39 (MSDKPNNFPPLPRFIPLKPCFYQDFDTDIPDLHRTTAKR) the chain is Cytoplasmic. A helical transmembrane segment spans residues 40 to 60 (LYYLWMLNSITLGVNLIGCLA). At 61–67 (WLIGGGS) the chain is on the extracellular side. A helical membrane pass occupies residues 68 to 88 (ATNFGLAFLWLILFTPCSYVC). Residues 89–102 (WFRPIYKAFKTDSS) lie on the Cytoplasmic side of the membrane. A helical membrane pass occupies residues 103–125 (FNFMAFFFTFTAQLVISIIQAVG). At 126–148 (IPGWGVCGWIASISFFGTNVGSA) the chain is on the extracellular side. The helical transmembrane segment at 149–169 (VVMLIPTIMFTAVAVLSFVAL) threads the bilayer. The Cytoplasmic segment spans residues 170-235 (TKVHRFYRGA…TPNYGYSNEM (66 aa)).

The protein belongs to the SCAMP family. SCAMP5 subfamily.

The protein resides in the cell membrane. It is found in the golgi apparatus membrane. It localises to the golgi apparatus. The protein localises to the trans-Golgi network membrane. Its subcellular location is the recycling endosome membrane. The protein resides in the cytoplasmic vesicle. It is found in the secretory vesicle. It localises to the synaptic vesicle membrane. Functionally, required for the calcium-dependent exocytosis of signal sequence-containing cytokines. Probably acts in cooperation with the SNARE machinery. The sequence is that of Secretory carrier-associated membrane protein 5A (scamp5-a) from Xenopus laevis (African clawed frog).